Consider the following 333-residue polypeptide: MGEQQQQVERQPDLPPGFRFHPTDEEIITFYLAPKVVDSRGFCVAAIGEVDLNKCEPWDLPGKAKMNGEKEWYFYCQKDRKYPTGMRTNRATEAGYWKATGKDKEIFRNHHMLIGMKKTLVFYKGRAPKGDKTNWVMHEYRLADASPPQPPPPPSSAEPPRQDDWAVCRIFHKSSGIKKPVQVPMQMPMQMQMPVAHQVPAANYQQQMAMASASIIQVPMQMQMPSMSDQLQMLDDFSTGSLMAPPPPPPSYSTLPGFPLQINGGAQQFVGNPSMYYQQQQQQQQQQMDMAAGGFVVSEPSSLVVSPQDAADQNNAADISSVACNMDATIWKY.

Residues 14–173 form the NAC domain; that stretch reads LPPGFRFHPT…DWAVCRIFHK (160 aa). Residues 114–179 mediate DNA binding; it reads IGMKKTLVFY…IFHKSSGIKK (66 aa). A disordered region spans residues 143–162; that stretch reads ADASPPQPPPPPSSAEPPRQ. Pro residues predominate over residues 147 to 157; that stretch reads PPQPPPPPSSA.

Forms homodimers. Forms heterodimers with NAC20. Forms heterodimers with NAC23. Expressed in developing seeds.

Its subcellular location is the nucleus. Functionally, transcription factor that acts redundantly with NAC20 to regulate the expression of genes involved in the biosynthesis of starch and storage proteins in grain. Directly binds to the promoters of starch synthase 1 (SS1), pullulanase (PUL), glutelin A1 (GLUA1), glutelins B4 and B5 (GLUB4 and GLUB5), alpha-globulin and 16 kDa prolamin, and activates their expression. Possesses transactivation activity in yeast. The sequence is that of NAC domain-containing protein 26 from Oryza sativa subsp. indica (Rice).